The chain runs to 202 residues: Protein GrpE (202 aa).

Residues 1–14 (MENTQENPTSQNPT) show a composition bias toward polar residues. Positions 1 to 58 (MENTQENPTSQNPTPADEAARQAAEAASGEPQDQARQPAAAAGEQPAQAQPAGAEAAL) are disordered. The segment covering 21-58 (RQAAEAASGEPQDQARQPAAAAGEQPAQAQPAGAEAAL) has biased composition (low complexity).

It belongs to the GrpE family. As to quaternary structure, homodimer.

Its subcellular location is the cytoplasm. In terms of biological role, participates actively in the response to hyperosmotic and heat shock by preventing the aggregation of stress-denatured proteins, in association with DnaK and GrpE. It is the nucleotide exchange factor for DnaK and may function as a thermosensor. Unfolded proteins bind initially to DnaJ; upon interaction with the DnaJ-bound protein, DnaK hydrolyzes its bound ATP, resulting in the formation of a stable complex. GrpE releases ADP from DnaK; ATP binding to DnaK triggers the release of the substrate protein, thus completing the reaction cycle. Several rounds of ATP-dependent interactions between DnaJ, DnaK and GrpE are required for fully efficient folding. This is Protein GrpE from Paraburkholderia phymatum (strain DSM 17167 / CIP 108236 / LMG 21445 / STM815) (Burkholderia phymatum).